We begin with the raw amino-acid sequence, 408 residues long: Adenylosuccinate synthetase (408 aa).

Residues 12 to 18 and 40 to 42 each bind GTP; these read GDEGKGK and GHT. Residue Asp-13 is the Proton acceptor of the active site. Residues Asp-13 and Gly-40 each contribute to the Mg(2+) site. IMP-binding positions include 13–16, 38–41, Thr-121, Arg-135, Gln-213, Thr-228, and Arg-292; these read DEGK and NAGH. The active-site Proton donor is His-41. Position 288 to 294 (288 to 294) interacts with substrate; it reads TTTGRPR. Residues Arg-294, 320-322, and 393-395 each bind GTP; these read KLD and STS.

It belongs to the adenylosuccinate synthetase family. Homodimer. Mg(2+) is required as a cofactor.

The protein resides in the cytoplasm. The catalysed reaction is IMP + L-aspartate + GTP = N(6)-(1,2-dicarboxyethyl)-AMP + GDP + phosphate + 2 H(+). Its pathway is purine metabolism; AMP biosynthesis via de novo pathway; AMP from IMP: step 1/2. Functionally, plays an important role in the de novo pathway of purine nucleotide biosynthesis. Catalyzes the first committed step in the biosynthesis of AMP from IMP. This Thermus thermophilus (strain ATCC BAA-163 / DSM 7039 / HB27) protein is Adenylosuccinate synthetase.